A 266-amino-acid chain; its full sequence is Small ribosomal subunit protein uS3 (266 aa).

In terms of domain architecture, KH type-2 spans 39 to 107 (VREYLKKKLK…PVHVNIEEIR (69 aa)). The segment at 218–266 (EVAEDKRPRRNARPGDRRPRRDGEGGAPGARRGAPRRGAGKPEDGKTGE) is disordered. Basic and acidic residues-rich tracts occupy residues 230–241 (RPGDRRPRRDGE) and 257–266 (GKPEDGKTGE).

Belongs to the universal ribosomal protein uS3 family. As to quaternary structure, part of the 30S ribosomal subunit. Forms a tight complex with proteins S10 and S14.

Functionally, binds the lower part of the 30S subunit head. Binds mRNA in the 70S ribosome, positioning it for translation. In Burkholderia multivorans (strain ATCC 17616 / 249), this protein is Small ribosomal subunit protein uS3.